Reading from the N-terminus, the 282-residue chain is tRNA pseudouridine synthase A (282 aa).

Residue aspartate 61 is the Nucleophile of the active site. Substrate is bound at residue tyrosine 119.

The protein belongs to the tRNA pseudouridine synthase TruA family. As to quaternary structure, homodimer.

The catalysed reaction is uridine(38/39/40) in tRNA = pseudouridine(38/39/40) in tRNA. Formation of pseudouridine at positions 38, 39 and 40 in the anticodon stem and loop of transfer RNAs. The chain is tRNA pseudouridine synthase A from Nostoc sp. (strain PCC 7120 / SAG 25.82 / UTEX 2576).